The primary structure comprises 966 residues: Regulator of G-protein signaling 3 (966 aa).

The region spanning 18 to 95 (QITIRRGKDG…EIILLVWRVV (78 aa)) is the PDZ domain. A disordered region spans residues 115–135 (THDLLSPPNKREKNCTHGAPV). R167 bears the Omega-N-methylarginine mark. 2 disordered regions span residues 403-618 (EADE…TGAV) and 637-704 (YSQL…RVQN). 2 stretches are compositionally biased toward polar residues: residues 527–548 (PETS…TELP) and 576–594 (SSAS…SSLG). Over residues 649–675 (GEDEDAEEGEEGGEGEEDEEDDTSDDN) the composition is skewed to acidic residues. Basic and acidic residues predominate over residues 676-686 (YGDRSEAKRSS). Phosphoserine occurs at positions 712, 715, 747, and 776. Positions 806–830 (FRRRNESPGAQPASKTDKTTKSFKP) are disordered. Residues 820–830 (KTDKTTKSFKP) show a composition bias toward basic and acidic residues. The RGS domain maps to 841–966 (SLEKLLLHKY…INQKKMSPPL (126 aa)).

As to quaternary structure, binds the GNB1-GNG2 heterodimer. Binds EFNB1 and EFNB2. Phosphorylated by cyclic GMP-dependent protein kinase. In terms of processing, ISGylated. In terms of tissue distribution, detected in embryos from E8.5-16.5 in cortical ventricular zone, dorsal root ganglia and cerebellar primordia. Isoform 3 is detected in testis and in spermatocytes from newborn mice. Levels increase and reach a maximum after 21 days; after this they decrease again. Long isoforms are widely expressed.

Its subcellular location is the cytoplasm. The protein localises to the cell membrane. The protein resides in the nucleus. Functionally, down-regulates signaling from heterotrimeric G-proteins by increasing the GTPase activity of the alpha subunits, thereby driving them into their inactive GDP-bound form. Down-regulates G-protein-mediated release of inositol phosphates and activation of MAP kinases. This is Regulator of G-protein signaling 3 (Rgs3) from Mus musculus (Mouse).